The sequence spans 511 residues: UPF0288 protein MK0796 (511 aa).

It belongs to the UPF0288 family.

The protein is UPF0288 protein MK0796 of Methanopyrus kandleri (strain AV19 / DSM 6324 / JCM 9639 / NBRC 100938).